Consider the following 412-residue polypeptide: Multifunctional CCA protein (412 aa).

Residues G8 and R11 each coordinate ATP. The CTP site is built by G8 and R11. Residues D21 and D23 each coordinate Mg(2+). Residues R91, R137, and R140 each coordinate ATP. 3 residues coordinate CTP: R91, R137, and R140. Residues 226 to 327 (TGEHVLMVVE…VKVLERCDAL (102 aa)) enclose the HD domain.

Belongs to the tRNA nucleotidyltransferase/poly(A) polymerase family. Bacterial CCA-adding enzyme type 1 subfamily. As to quaternary structure, monomer. Can also form homodimers and oligomers. It depends on Mg(2+) as a cofactor. Ni(2+) is required as a cofactor.

It carries out the reaction a tRNA precursor + 2 CTP + ATP = a tRNA with a 3' CCA end + 3 diphosphate. The enzyme catalyses a tRNA with a 3' CCA end + 2 CTP + ATP = a tRNA with a 3' CCACCA end + 3 diphosphate. In terms of biological role, catalyzes the addition and repair of the essential 3'-terminal CCA sequence in tRNAs without using a nucleic acid template. Adds these three nucleotides in the order of C, C, and A to the tRNA nucleotide-73, using CTP and ATP as substrates and producing inorganic pyrophosphate. tRNA 3'-terminal CCA addition is required both for tRNA processing and repair. Also involved in tRNA surveillance by mediating tandem CCA addition to generate a CCACCA at the 3' terminus of unstable tRNAs. While stable tRNAs receive only 3'-terminal CCA, unstable tRNAs are marked with CCACCA and rapidly degraded. The chain is Multifunctional CCA protein from Azoarcus sp. (strain BH72).